We begin with the raw amino-acid sequence, 314 residues long: Methionyl-tRNA formyltransferase (314 aa).

110–113 (SLLP) lines the (6S)-5,6,7,8-tetrahydrofolate pocket.

It belongs to the Fmt family.

It carries out the reaction L-methionyl-tRNA(fMet) + (6R)-10-formyltetrahydrofolate = N-formyl-L-methionyl-tRNA(fMet) + (6S)-5,6,7,8-tetrahydrofolate + H(+). Functionally, attaches a formyl group to the free amino group of methionyl-tRNA(fMet). The formyl group appears to play a dual role in the initiator identity of N-formylmethionyl-tRNA by promoting its recognition by IF2 and preventing the misappropriation of this tRNA by the elongation apparatus. This chain is Methionyl-tRNA formyltransferase, found in Dichelobacter nodosus (strain VCS1703A).